Consider the following 628-residue polypeptide: Phomenoic acid biosynthesis cluster MFS-type transporter (628 aa).

Transmembrane regions (helical) follow at residues 102–122 (IHGF…FLYA), 150–170 (VGFV…YGIL), 174–194 (WLYI…GAAP), 204–224 (VFAG…LSIN), 232–252 (AYLS…PVIG), 262–282 (WAFY…FFLL), 302–322 (FVGA…INFG), 329–349 (NSGT…AFAV), 375–395 (MLLF…IYFI), 407–427 (ALDS…TILV), 435–455 (FGYY…ANVF), 488–508 (GFEA…YAVI), 524–544 (IMIA…AVFI), and 595–615 (AKAF…SLGF).

The protein belongs to the major facilitator superfamily. TCR/Tet family.

Its subcellular location is the cell membrane. Functionally, MFS-type transporter; part of the gene cluster that mediates the biosynthesis of phomenoic acid, a long chain aliphatic carboxylic acid that does not appear to be essential for pathogenicity but may play a role in allowing to outcompete other fungi in the environmental niche via its antifungal properties. Is probably involved in the efflux of phomenoic acid. The protein is Phomenoic acid biosynthesis cluster MFS-type transporter of Leptosphaeria maculans (strain JN3 / isolate v23.1.3 / race Av1-4-5-6-7-8) (Blackleg fungus).